A 393-amino-acid chain; its full sequence is 1-deoxy-D-xylulose 5-phosphate reductoisomerase (393 aa).

7 residues coordinate NADPH: T10, G11, S12, I13, R37, Q38, and N124. 1-deoxy-D-xylulose 5-phosphate is bound at residue K125. NADPH is bound at residue E126. A Mn(2+)-binding site is contributed by D150. 1-deoxy-D-xylulose 5-phosphate contacts are provided by S151, E152, S179, and H202. Residue E152 coordinates Mn(2+). G208 lines the NADPH pocket. 1-deoxy-D-xylulose 5-phosphate contacts are provided by S215, N220, K221, and E224. E224 is a Mn(2+) binding site.

Belongs to the DXR family. The cofactor is Mg(2+). Requires Mn(2+) as cofactor.

The catalysed reaction is 2-C-methyl-D-erythritol 4-phosphate + NADP(+) = 1-deoxy-D-xylulose 5-phosphate + NADPH + H(+). Its pathway is isoprenoid biosynthesis; isopentenyl diphosphate biosynthesis via DXP pathway; isopentenyl diphosphate from 1-deoxy-D-xylulose 5-phosphate: step 1/6. Its function is as follows. Catalyzes the NADPH-dependent rearrangement and reduction of 1-deoxy-D-xylulose-5-phosphate (DXP) to 2-C-methyl-D-erythritol 4-phosphate (MEP). The protein is 1-deoxy-D-xylulose 5-phosphate reductoisomerase of Cupriavidus taiwanensis (strain DSM 17343 / BCRC 17206 / CCUG 44338 / CIP 107171 / LMG 19424 / R1) (Ralstonia taiwanensis (strain LMG 19424)).